The chain runs to 191 residues: Elongation factor P (191 aa).

N6-(3,6-diaminohexanoyl)-5-hydroxylysine is present on K34.

This sequence belongs to the elongation factor P family. May be beta-lysylated on the epsilon-amino group of Lys-34 by the combined action of EpmA and EpmB, and then hydroxylated on the C5 position of the same residue by EpmC (if this protein is present). Lysylation is critical for the stimulatory effect of EF-P on peptide-bond formation. The lysylation moiety may extend toward the peptidyltransferase center and stabilize the terminal 3-CCA end of the tRNA. Hydroxylation of the C5 position on Lys-34 may allow additional potential stabilizing hydrogen-bond interactions with the P-tRNA.

It localises to the cytoplasm. Its pathway is protein biosynthesis; polypeptide chain elongation. Functionally, involved in peptide bond synthesis. Alleviates ribosome stalling that occurs when 3 or more consecutive Pro residues or the sequence PPG is present in a protein, possibly by augmenting the peptidyl transferase activity of the ribosome. Modification of Lys-34 is required for alleviation. This Psychrobacter sp. (strain PRwf-1) protein is Elongation factor P.